A 329-amino-acid polypeptide reads, in one-letter code: Ribose-phosphate pyrophosphokinase B (329 aa).

Mg(2+) contacts are provided by D131, H133, and E146. Positions 227–242 (TGKIAIIIDDIADTCK) are binding of phosphoribosylpyrophosphate.

The protein belongs to the ribose-phosphate pyrophosphokinase family. Mg(2+) serves as cofactor.

It is found in the cytoplasm. The enzyme catalyses D-ribose 5-phosphate + ATP = 5-phospho-alpha-D-ribose 1-diphosphate + AMP + H(+). It functions in the pathway metabolic intermediate biosynthesis; 5-phospho-alpha-D-ribose 1-diphosphate biosynthesis; 5-phospho-alpha-D-ribose 1-diphosphate from D-ribose 5-phosphate (route I): step 1/1. The polypeptide is Ribose-phosphate pyrophosphokinase B (prsB) (Dictyostelium discoideum (Social amoeba)).